The sequence spans 1164 residues: Phospholipid-transporting ATPase IA (1164 aa).

Residues 1-75 (MPTMRRTVSE…PRFLYSQFRR (75 aa)) are Cytoplasmic-facing. The residue at position 25 (Ser25) is a Phosphoserine. Thr28 carries the post-translational modification Phosphothreonine. Ser29 carries the phosphoserine modification. Residues 76 to 96 (AANSFFLFIALLQQIPDVSPT) traverse the membrane as a helical segment. The Exoplasmic loop segment spans residues 97 to 100 (GRYT). Residues 101–121 (TLVPLLFILAVAAIKEIIEDI) form a helical membrane-spanning segment. The Cytoplasmic portion of the chain corresponds to 122-297 (KRHKADNAVN…SNVERITNVQ (176 aa)). Residues 298-318 (ILILFCILIAMSLVCSVGSAI) form a helical membrane-spanning segment. Topologically, residues 319-339 (WNRRHSGKDWYLHLHYGGASN) are exoplasmic loop. A helical membrane pass occupies residues 340-360 (FGLNFLTFIILFNNLIPISLL). Residues 361–866 (VTLEVVKFTQ…KCILYCFYKN (506 aa)) lie on the Cytoplasmic side of the membrane. Asp409 functions as the 4-aspartylphosphate intermediate in the catalytic mechanism. The ATP site is built by Asp409, Lys410, and Thr411. Asp409 is a Mg(2+) binding site. Thr411 is a Mg(2+) binding site. At Ser443 the chain carries Phosphoserine. ATP-binding positions include Glu508, Phe549, Lys572, Arg605, Thr685, Gly686, Asp687, 741–748 (ALIIDGKT), Arg775, and Lys781. Position 801 (Asp801) interacts with Mg(2+). 2 residues coordinate ATP: Asn804 and Asp805. Asp805 is a Mg(2+) binding site. A helical membrane pass occupies residues 867–887 (IVLYIIEIWFAFVNGFSGQIL). The Exoplasmic loop segment spans residues 888-890 (FER). Residues 891–911 (WCIGLYNVMFTAMPPLTLGIF) form a helical membrane-spanning segment. Residues 912–939 (ERSCRKENMLKYPELYKTSQNALDFNTK) are Cytoplasmic-facing. A helical membrane pass occupies residues 940-960 (VFWVHCLNGLFHSVILFWFPL). The Exoplasmic loop portion of the chain corresponds to 961–977 (KALQYGTVFGNGKTSDY). The chain crosses the membrane as a helical span at residues 978–998 (LLLGNFVYTFVVITVCLKAGL). Over 999 to 1008 (ETSYWTWFSH) the chain is Cytoplasmic. Residues 1009–1029 (IAIWGSIALWVVFFGIYSSLW) form a helical membrane-spanning segment. Over 1030–1044 (PAVPMAPDMSGEAAM) the chain is Exoplasmic loop. The helical transmembrane segment at 1045–1065 (LFSSGVFWVGLLSIPVASLLL) threads the bilayer. Topologically, residues 1066–1164 (DVLYKVIKRT…DTTKQRPDEW (99 aa)) are cytoplasmic. 1095–1102 (GAVVLGKS) provides a ligand contact to ATP. A Phosphoserine modification is found at Ser1126.

This sequence belongs to the cation transport ATPase (P-type) (TC 3.A.3) family. Type IV subfamily. In terms of assembly, component of a P4-ATPase flippase complex which consists of a catalytic alpha subunit and an accessory beta subunit. Interacts with TMEM30A to form a flippase complex; this complex forms an intermediate phosphoenzyme. Interacts with TMEM30B; this interaction is reported conflictingly. It depends on Mg(2+) as a cofactor. Post-translationally, cleaved by calpain in a caspase- and calcium influx-dependent manner only during platelet apoptosis and may lead to inactivation. As to expression, found in most tissues except liver and testis. Most abundant in brain and lung. Also detected in fetal tissues. Isoform 1 is expressed in brain. Isoform 2 and isoform 3 are expressed in reticulocytes. Expressed in mouse hippocampus in both dentate gyrus (DG) and the CA3 regions. Expressed in both neuronal as well as non-neuronal cells within the DG. Highly expressed in platelets.

Its subcellular location is the cytoplasmic vesicle. The protein localises to the secretory vesicle. The protein resides in the chromaffin granule membrane. It is found in the cytoplasmic granule. It localises to the cell membrane. Its subcellular location is the endoplasmic reticulum. The protein localises to the golgi apparatus. The protein resides in the endomembrane system. It carries out the reaction ATP + H2O + phospholipidSide 1 = ADP + phosphate + phospholipidSide 2.. The enzyme catalyses a 1,2-diacyl-sn-glycero-3-phospho-L-serine(out) + ATP + H2O = a 1,2-diacyl-sn-glycero-3-phospho-L-serine(in) + ADP + phosphate + H(+). With respect to regulation, ATPase activity is stimulated by phosphatidylserine (PS) and minimally by phosphatidylethanolamine (PE). ATPase activity is inhibited by the vanadate and by the presence of calcium. In terms of biological role, catalytic component of a P4-ATPase flippase complex which catalyzes the hydrolysis of ATP coupled to the transport of aminophospholipids from the outer to the inner leaflet of various membranes and ensures the maintenance of asymmetric distribution of phospholipids. Phospholipid translocation also seems to be implicated in vesicle formation and in uptake of lipid signaling molecules. In vitro, its ATPase activity is selectively and stereospecifically stimulated by phosphatidylserine (PS). The flippase complex ATP8A1:TMEM30A seems to play a role in regulation of cell migration probably involving flippase-mediated translocation of phosphatidylethanolamine (PE) at the cell membrane. Acts as aminophospholipid translocase at the cell membrane in neuronal cells; the activity is associated with hippocampus-dependent learning. May play a role in brain connectivity. The chain is Phospholipid-transporting ATPase IA from Mus musculus (Mouse).